Here is a 557-residue protein sequence, read N- to C-terminus: CDP-diacylglycerol--glycerol-3-phosphate 3-phosphatidyltransferase, mitochondrial (557 aa).

The transit peptide at 1 to 25 directs the protein to the mitochondrion; that stretch reads MAAAGGAALWRRLAAWLPRGPPGLA. Residue 121-128 participates in ATP binding; it reads ASLYLGTG. The region spanning 212–238 is the PLD phosphodiesterase 1 domain; sequence TIGLQHIKVYLFDDNVILSGANLSDLY. Residues H217, K219, and D224 contribute to the active site. The disordered stretch occupies residues 322 to 346; the sequence is TFHSSQQGSSMLPQHDSEASEGLKP. The span at 323–333 shows a compositional bias: polar residues; that stretch reads FHSSQQGSSML. The span at 336–346 shows a compositional bias: basic and acidic residues; it reads HDSEASEGLKP. In terms of domain architecture, PLD phosphodiesterase 2 spans 461-494; that stretch reads AGWTFHAKGLWLYLAGSSLPCLTLIGSPNFGYRS.

The protein belongs to the CDP-alcohol phosphatidyltransferase class-II family.

The protein resides in the mitochondrion. It carries out the reaction a CDP-1,2-diacyl-sn-glycerol + sn-glycerol 3-phosphate = a 1,2-diacyl-sn-glycero-3-phospho-(1'-sn-glycero-3'-phosphate) + CMP + H(+). The protein operates within phospholipid metabolism; phosphatidylglycerol biosynthesis; phosphatidylglycerol from CDP-diacylglycerol: step 1/2. With respect to regulation, activated by calcium and magnesium and inhibited by other bivalent cations. Its function is as follows. Functions in the biosynthesis of the anionic phospholipids phosphatidylglycerol and cardiolipin. This chain is CDP-diacylglycerol--glycerol-3-phosphate 3-phosphatidyltransferase, mitochondrial (PGS1), found in Gallus gallus (Chicken).